The chain runs to 180 residues: Large ribosomal subunit protein eL18 (180 aa).

The tract at residues 152–180 is disordered; it reads FGPAPGVPGSHTKPYVISKSRERTNAHRA. Basic and acidic residues predominate over residues 170–180; the sequence is KSRERTNAHRA.

The protein belongs to the eukaryotic ribosomal protein eL18 family.

The protein localises to the cytoplasm. This chain is Large ribosomal subunit protein eL18 (RPL18), found in Taenia asiatica (Asian tapeworm).